The primary structure comprises 300 residues: Merozoite surface protein 2 (300 aa).

Residues 1–20 (MKVIKTLSIINFFIFVTFNI) form the signal peptide. Asparagine 22 and asparagine 36 each carry an N-linked (GlcNAc...) asparagine glycan. The polymorphic region stretch occupies residues 44-226 (EESKPPTGAV…EQTESPELQS (183 aa)). A 1; inverted repeat occupies 51–58 (GAVAGSGA). Residues 51-74 (GAVAGSGAGAGSGAGAVAGSGAGA) are 7 X 8 AA tandem repeats of G-S-G-A-G-A-V-A. 5 repeat units span residues 61–68 (GSGAGAVA), 69–76 (GSGAGAVA), 77–84 (GSGAGAVA), 85–92 (GSGAGAVA), and 93–100 (GSGAGAVA). The stretch at 103 to 110 (GAVAGSGA) is one 7; inverted repeat. A disordered region spans residues 111-261 (GNGANPGADA…DSQKECTDGN (151 aa)). The span at 124-148 (PSTPATTTTTTTTNDAEASTSTSSE) shows a compositional bias: low complexity. The segment covering 149-165 (NRNHNNAETNPKGKGEV) has biased composition (basic and acidic residues). Polar residues-rich tracts occupy residues 167 to 193 (KPNQ…NVPR) and 200 to 228 (KSPT…QSAP). N-linked (GlcNAc...) asparagine glycosylation occurs at asparagine 177. Asparagine 249 carries an N-linked (GlcNAc...) asparagine glycan. Cysteines 257 and 265 form a disulfide. N-linked (GlcNAc...) asparagine glycosylation is found at asparagine 273 and asparagine 274. A lipid anchor (GPI-anchor amidated asparagine) is attached at asparagine 274. The propeptide at 275–300 (SSNIASINKFVVLISATLVLSFAIFI) is removed in mature form.

Its subcellular location is the cell membrane. In terms of biological role, may play a role in the merozoite attachment to the erythrocyte. This chain is Merozoite surface protein 2, found in Plasmodium falciparum (isolate mad71 / Papua New Guinea).